The chain runs to 548 residues: C-type lectin domain family 4 member F (548 aa).

Topologically, residues 1–42 (MKEAELNRDMARYCTDNQCVSLQPQGLGPKSAALMAPRTLRH) are cytoplasmic. Residues 43–69 (VQVILALMVVTVIFSLLALFVVASQPW) form a helical; Signal-anchor for type II membrane protein membrane-spanning segment. The Extracellular portion of the chain corresponds to 70–548 (RPEWNKEPPS…STGWSAARVG (479 aa)). Residues Asn86, Asn92, Asn115, Asn132, Asn209, and Asn255 are each glycosylated (N-linked (GlcNAc...) asparagine). One can recognise a C-type lectin domain in the interval 438–538 (KFCTSQGAHL…GSSYPWVCKK (101 aa)). 2 disulfide bridges follow: Cys440-Cys536 and Cys516-Cys528.

As to expression, kupffer cells.

It localises to the membrane. Functionally, receptor with an affinity for galactose and fucose. Could be involved in endocytosis. In Mus musculus (Mouse), this protein is C-type lectin domain family 4 member F (Clec4f).